The chain runs to 633 residues: Glutamyl-tRNA(Gln) amidotransferase subunit E (633 aa).

The segment at 415–437 (LDDGTTKFLRPQPGSARMYPETD) is disordered.

Belongs to the GatB/GatE family. GatE subfamily. In terms of assembly, heterodimer of GatD and GatE.

It catalyses the reaction L-glutamyl-tRNA(Gln) + L-glutamine + ATP + H2O = L-glutaminyl-tRNA(Gln) + L-glutamate + ADP + phosphate + H(+). Allows the formation of correctly charged Gln-tRNA(Gln) through the transamidation of misacylated Glu-tRNA(Gln) in organisms which lack glutaminyl-tRNA synthetase. The reaction takes place in the presence of glutamine and ATP through an activated gamma-phospho-Glu-tRNA(Gln). The GatDE system is specific for glutamate and does not act on aspartate. The protein is Glutamyl-tRNA(Gln) amidotransferase subunit E of Saccharolobus solfataricus (strain ATCC 35092 / DSM 1617 / JCM 11322 / P2) (Sulfolobus solfataricus).